A 392-amino-acid chain; its full sequence is MSGPVPSRARVYTDVNTHRPRDYWDYESHVVEWGNQDDYQLVRKLGRGKYSEVFEAINITNNEKVVVKILKPVKKKKIKREIKILENLRGGPNIITLADIVKDPVSRTPALVFEHVNNTDFKQLYQTLTDYDIRFYMYEILKALDYCHSMGIMHRDVKPHNVMIDHEHRKLRLIDWGLAEFYHPGQEYNVRVASRYFKGPELLVDYQMYDYSLDMWSLGCMLASMIFRKEPFFHGHDNYDQLVRIAKVLGTEDLYDYIDKYNIELDPRFNDILGRHSRKRWERFVHSENQHLVSPEALDFLDKLLRYDHQTRLTAREAMDHPYFYPIVKDQSRMGGSNMPSGSSTPVSSASMMSGISTVPTPSALGSLAGSPVISATNTLGTPVAAAAGATQ.

One can recognise a Protein kinase domain in the interval 39 to 324 (YQLVRKLGRG…AREAMDHPYF (286 aa)). Residues 45 to 53 (LGRGKYSEV) and Lys68 contribute to the ATP site. Asp156 acts as the Proton acceptor in catalysis. A disordered region spans residues 334–355 (MGGSNMPSGSSTPVSSASMMSG). Residues 337-354 (SNMPSGSSTPVSSASMMS) are compositionally biased toward low complexity.

The protein belongs to the protein kinase superfamily. Ser/Thr protein kinase family. CK2 subfamily. In terms of assembly, tetramer composed of an alpha chain, an alpha' and two beta chains.

Its subcellular location is the nucleus. It carries out the reaction L-seryl-[protein] + ATP = O-phospho-L-seryl-[protein] + ADP + H(+). The enzyme catalyses L-threonyl-[protein] + ATP = O-phospho-L-threonyl-[protein] + ADP + H(+). Its function is as follows. Catalytic subunit of a constitutively active serine/threonine-protein kinase complex that phosphorylates a large number of substrates containing acidic residues C-terminal to the phosphorylated serine or threonine. Regulates numerous cellular processes, such as cell cycle progression, apoptosis and transcription, as well as viral infection. May act as a regulatory node which integrates and coordinates numerous signals leading to an appropriate cellular response. During mitosis, functions as a component of the p53/TP53-dependent spindle assembly checkpoint (SAC) that maintains cyclin-B-CDK1 activity and G2 arrest in response to spindle damage. Can also negatively regulate apoptosis. Phosphorylates the caspases CASP9 and CASP2 and the apoptotic regulator NOL3. Phosphorylation protects CASP9 from cleavage and activation by CASP8, and inhibits the dimerization of CASP2 and activation of CASP8. Plays an important role in the circadian clock function by phosphorylating BMAL1. The protein is Casein kinase II subunit alpha (csnk2a1) of Xenopus laevis (African clawed frog).